We begin with the raw amino-acid sequence, 469 residues long: Probable glycine dehydrogenase (decarboxylating) subunit 1 (469 aa).

Belongs to the GcvP family. N-terminal subunit subfamily. As to quaternary structure, the glycine cleavage system is composed of four proteins: P, T, L and H. In this organism, the P 'protein' is a heterodimer of two subunits.

The enzyme catalyses N(6)-[(R)-lipoyl]-L-lysyl-[glycine-cleavage complex H protein] + glycine + H(+) = N(6)-[(R)-S(8)-aminomethyldihydrolipoyl]-L-lysyl-[glycine-cleavage complex H protein] + CO2. Functionally, the glycine cleavage system catalyzes the degradation of glycine. The P protein binds the alpha-amino group of glycine through its pyridoxal phosphate cofactor; CO(2) is released and the remaining methylamine moiety is then transferred to the lipoamide cofactor of the H protein. This Staphylothermus marinus (strain ATCC 43588 / DSM 3639 / JCM 9404 / F1) protein is Probable glycine dehydrogenase (decarboxylating) subunit 1.